A 320-amino-acid chain; its full sequence is MARNKIALIGSGMIGGTLAHLAGLKELGDVVLFDIAEGTPQGKGLDIAESSPVDGFDAKFTGANDYAAIEGADVVIVTAGVPRKPGMSRDDLLGINLKVMEQVGAGIKKYAPEAFVICITNPLDAMVWALQKFSGLPAHKVVGMAGVLDSARFRYFLSEEFNVSVEDVTVFVLGGHGDSMVPLARYSTVAGIPLPDLVKMGWTSQDKLDKIIQRTRDGGAEIVGLLKTGSAFYAPAASAIQMAESYLKDKKRVLPVAAQLSGQYGVKDMYVGVPTVIGANGVERIIEIDLDKDEKAQFDKSVASVAGLCEACIGIAPSLK.

Residues 10 to 15 (GSGMIG) and aspartate 34 contribute to the NAD(+) site. The substrate site is built by arginine 83 and arginine 89. Residues asparagine 96 and 119–121 (ITN) each bind NAD(+). The substrate site is built by asparagine 121 and arginine 152. Histidine 176 acts as the Proton acceptor in catalysis.

It belongs to the LDH/MDH superfamily. MDH type 3 family.

The catalysed reaction is (S)-malate + NAD(+) = oxaloacetate + NADH + H(+). Catalyzes the reversible oxidation of malate to oxaloacetate. This is Malate dehydrogenase from Brucella abortus (strain S19).